We begin with the raw amino-acid sequence, 813 residues long: Leucine--tRNA ligase (813 aa).

The 'HIGH' region motif lies at 41 to 51 (PYPSGTLHMGH). A 'KMSKS' region motif is present at residues 575-579 (KMSKS). K578 contributes to the ATP binding site.

This sequence belongs to the class-I aminoacyl-tRNA synthetase family.

It localises to the cytoplasm. It catalyses the reaction tRNA(Leu) + L-leucine + ATP = L-leucyl-tRNA(Leu) + AMP + diphosphate. In Francisella tularensis subsp. holarctica (strain FTNF002-00 / FTA), this protein is Leucine--tRNA ligase.